The primary structure comprises 134 residues: MGKDTIADIITSIRNADMNRKGTVRIGSTNITESIVKILLREGFIENVRKHRENNQYFLILTLRHRRNKKESYKTILNLKRISRPGLRIYSNSQRIPRILGGIGIVILSTSRGIMTDREARLKRVGGEILCYIW.

This sequence belongs to the universal ribosomal protein uS8 family. As to quaternary structure, part of the 30S ribosomal subunit.

The protein localises to the plastid. Its subcellular location is the chloroplast. One of the primary rRNA binding proteins, it binds directly to 16S rRNA central domain where it helps coordinate assembly of the platform of the 30S subunit. This is Small ribosomal subunit protein uS8c (rps8) from Aethionema cordifolium (Lebanon stonecress).